Consider the following 452-residue polypeptide: D-inositol 3-phosphate glycosyltransferase (452 aa).

Position 25 (His25) interacts with 1D-myo-inositol 3-phosphate. Residues 31–32 (QP) and Gly39 contribute to the UDP-N-acetyl-alpha-D-glucosamine site. Residues 36–41 (DAGGMN), Lys94, Tyr127, Thr151, and Arg171 contribute to the 1D-myo-inositol 3-phosphate site. UDP-N-acetyl-alpha-D-glucosamine-binding residues include Arg245, Lys250, and Gln309. Mg(2+) is bound by residues Tyr318, Arg319, and Ser321. Glu331 and Glu339 together coordinate UDP-N-acetyl-alpha-D-glucosamine. Position 345 (Thr345) interacts with Mg(2+).

Belongs to the glycosyltransferase group 1 family. MshA subfamily. Homodimer.

It catalyses the reaction 1D-myo-inositol 3-phosphate + UDP-N-acetyl-alpha-D-glucosamine = 1D-myo-inositol 2-acetamido-2-deoxy-alpha-D-glucopyranoside 3-phosphate + UDP + H(+). In terms of biological role, catalyzes the transfer of a N-acetyl-glucosamine moiety to 1D-myo-inositol 3-phosphate to produce 1D-myo-inositol 2-acetamido-2-deoxy-glucopyranoside 3-phosphate in the mycothiol biosynthesis pathway. This chain is D-inositol 3-phosphate glycosyltransferase, found in Rhodococcus jostii (strain RHA1).